Consider the following 516-residue polypeptide: Bifunctional purine biosynthesis protein PurH (516 aa).

Residues 1–150 (MSDDRKQIKR…KNHPSVAVVV (150 aa)) enclose the MGS-like domain.

Belongs to the PurH family.

It carries out the reaction (6R)-10-formyltetrahydrofolate + 5-amino-1-(5-phospho-beta-D-ribosyl)imidazole-4-carboxamide = 5-formamido-1-(5-phospho-D-ribosyl)imidazole-4-carboxamide + (6S)-5,6,7,8-tetrahydrofolate. The enzyme catalyses IMP + H2O = 5-formamido-1-(5-phospho-D-ribosyl)imidazole-4-carboxamide. Its pathway is purine metabolism; IMP biosynthesis via de novo pathway; 5-formamido-1-(5-phospho-D-ribosyl)imidazole-4-carboxamide from 5-amino-1-(5-phospho-D-ribosyl)imidazole-4-carboxamide (10-formyl THF route): step 1/1. It participates in purine metabolism; IMP biosynthesis via de novo pathway; IMP from 5-formamido-1-(5-phospho-D-ribosyl)imidazole-4-carboxamide: step 1/1. This Corynebacterium ammoniagenes (Brevibacterium ammoniagenes) protein is Bifunctional purine biosynthesis protein PurH.